The following is a 192-amino-acid chain: Probable cobalt-precorrin-6B C(15)-methyltransferase (decarboxylating) (192 aa).

Residues Thr17, 41-45 (GCGTG), Asp62, and Ala91 contribute to the S-adenosyl-L-methionine site.

This sequence belongs to the methyltransferase superfamily. Archaeal-type CbiT family. Homotetramer.

The catalysed reaction is Co-precorrin-6B + S-adenosyl-L-methionine = Co-precorrin-7 + S-adenosyl-L-homocysteine + CO2. It participates in cofactor biosynthesis; adenosylcobalamin biosynthesis; cob(II)yrinate a,c-diamide from sirohydrochlorin (anaerobic route): step 8/10. Its function is as follows. Catalyzes the methylation of C-15 in cobalt-precorrin-6B followed by the decarboxylation of C-12 to form cobalt-precorrin-7. The protein is Probable cobalt-precorrin-6B C(15)-methyltransferase (decarboxylating) of Methanothermobacter thermautotrophicus (strain ATCC 29096 / DSM 1053 / JCM 10044 / NBRC 100330 / Delta H) (Methanobacterium thermoautotrophicum).